Consider the following 173-residue polypeptide: Inorganic pyrophosphatase (173 aa).

Substrate contacts are provided by Lys28, Arg42, and Tyr54. 3 residues coordinate Mg(2+): Asp64, Asp69, and Asp101. Residue Tyr140 participates in substrate binding.

The protein belongs to the PPase family. Homohexamer. It depends on Mg(2+) as a cofactor.

Its subcellular location is the cytoplasm. The enzyme catalyses diphosphate + H2O = 2 phosphate + H(+). Its function is as follows. Catalyzes the hydrolysis of inorganic pyrophosphate (PPi) forming two phosphate ions. This is Inorganic pyrophosphatase from Helicobacter pylori (strain ATCC 700392 / 26695) (Campylobacter pylori).